The sequence spans 257 residues: Snake venom serine protease nikobin (257 aa).

Residues 1–18 (MVLIRVLANLLLLQLSYA) form the signal peptide. A propeptide spanning residues 19–24 (QKSSEL) is cleaved from the precursor. The region spanning 25–248 (VIGGDECNIN…YSDWIQSIIA (224 aa)) is the Peptidase S1 domain. 6 disulfides stabilise this stretch: Cys-31–Cys-162, Cys-49–Cys-65, Cys-97–Cys-255, Cys-141–Cys-209, Cys-173–Cys-188, and Cys-199–Cys-224. Active-site charge relay system residues include His-64 and Asp-109. Asn-120 and Asn-121 each carry an N-linked (GlcNAc...) asparagine glycan. Ser-203 acts as the Charge relay system in catalysis. N-linked (GlcNAc...) asparagine glycosylation is present at Asn-250.

This sequence belongs to the peptidase S1 family. Snake venom subfamily. Monomer. In terms of tissue distribution, expressed by the venom gland.

It localises to the secreted. In terms of biological role, snake venom serine protease that may act in the hemostasis system of the prey. This is Snake venom serine protease nikobin (sp-VN) from Vipera nikolskii (Nikolsky's adder).